The chain runs to 646 residues: Vitamin K-dependent protein S (646 aa).

Residues Gly-1–Arg-12 constitute a propeptide that is removed on maturation. The 46-residue stretch at Ala-13–Gly-58 folds into the Gla domain. A 4-carboxyglutamate mark is found at Glu-18, Glu-19, Glu-26, Glu-28, Glu-31, Glu-32, Glu-37, Glu-38, Glu-41, Glu-44, and Glu-48. Cys-29 and Cys-34 are oxidised to a cystine. The segment at Cys-59–Ala-87 is thrombin-sensitive. Positions Ile-88 to Glu-126 constitute an EGF-like 1 domain. Disulfide bonds link Cys-92–Cys-105, Cys-97–Cys-114, Cys-116–Cys-125, Cys-132–Cys-146, Cys-142–Cys-155, Cys-157–Cys-170, Cys-176–Cys-188, Cys-183–Cys-197, Cys-199–Cys-212, Cys-218–Cys-227, Cys-223–Cys-236, Cys-238–Cys-253, and Cys-420–Cys-446. A (3R)-3-hydroxyaspartate modification is found at Asp-107. One can recognise an EGF-like 2; calcium-binding domain in the interval Asp-128–Lys-171. Positions Asp-172–Glu-213 constitute an EGF-like 3; calcium-binding domain. An EGF-like 4; calcium-binding domain is found at Asp-214 to Glu-254. Laminin G-like domains lie at Leu-270 to Cys-446 and Tyr-455 to Cys-636. Asn-470 and Asn-480 each carry an N-linked (GlcNAc...) asparagine glycan. The cysteines at positions 609 and 636 are disulfide-linked.

As to quaternary structure, interacts with C4b-binding protein, a regulator of the complex system. In rabbit plasma however, protein S appears to be present only in free form. Post-translationally, the iron and 2-oxoglutarate dependent 3-hydroxylation of aspartate and asparagine is (R) stereospecific within EGF domains. As to expression, plasma.

It is found in the secreted. In terms of biological role, anticoagulant plasma protein; it is a cofactor to activated protein C in the degradation of coagulation factors Va and VIIIa. It helps to prevent coagulation and stimulating fibrinolysis. The protein is Vitamin K-dependent protein S (PROS1) of Oryctolagus cuniculus (Rabbit).